A 262-amino-acid polypeptide reads, in one-letter code: Acyl-[acyl-carrier-protein]--UDP-N-acetylglucosamine O-acyltransferase (262 aa).

Belongs to the transferase hexapeptide repeat family. LpxA subfamily. As to quaternary structure, homotrimer.

The protein resides in the cytoplasm. It carries out the reaction a (3R)-hydroxyacyl-[ACP] + UDP-N-acetyl-alpha-D-glucosamine = a UDP-3-O-[(3R)-3-hydroxyacyl]-N-acetyl-alpha-D-glucosamine + holo-[ACP]. Its pathway is glycolipid biosynthesis; lipid IV(A) biosynthesis; lipid IV(A) from (3R)-3-hydroxytetradecanoyl-[acyl-carrier-protein] and UDP-N-acetyl-alpha-D-glucosamine: step 1/6. Involved in the biosynthesis of lipid A, a phosphorylated glycolipid that anchors the lipopolysaccharide to the outer membrane of the cell. This Salmonella schwarzengrund (strain CVM19633) protein is Acyl-[acyl-carrier-protein]--UDP-N-acetylglucosamine O-acyltransferase.